The sequence spans 111 residues: Flagellar hook-basal body complex protein FliE (111 aa).

The protein belongs to the FliE family.

Its subcellular location is the bacterial flagellum basal body. This chain is Flagellar hook-basal body complex protein FliE, found in Brucella abortus (strain S19).